The chain runs to 217 residues: Adenylate kinase (217 aa).

11 to 16 contributes to the ATP binding site; that stretch reads GAGKGT. Residues 31-60 are NMP; it reads STGDMFREAMANKTPVGLEAKSYIDKGDLV. Residues threonine 32, arginine 37, 58-60, 86-89, and glutamine 93 contribute to the AMP site; these read DLV and GFPR. Residues 127–165 are LID; the sequence is ARFMCKNCGATYNKFSKKPKVEGTCDRCGGHEFYQREDD. Residue arginine 128 participates in ATP binding. Zn(2+) is bound by residues cysteine 131 and cysteine 134. 137–138 serves as a coordination point for ATP; sequence TY. Zn(2+)-binding residues include cysteine 151 and cysteine 154. Residues arginine 162 and arginine 173 each coordinate AMP. Position 201 (glutamine 201) interacts with ATP.

This sequence belongs to the adenylate kinase family. In terms of assembly, monomer.

It is found in the cytoplasm. The catalysed reaction is AMP + ATP = 2 ADP. It functions in the pathway purine metabolism; AMP biosynthesis via salvage pathway; AMP from ADP: step 1/1. In terms of biological role, catalyzes the reversible transfer of the terminal phosphate group between ATP and AMP. Plays an important role in cellular energy homeostasis and in adenine nucleotide metabolism. This Lactobacillus delbrueckii subsp. bulgaricus (strain ATCC 11842 / DSM 20081 / BCRC 10696 / JCM 1002 / NBRC 13953 / NCIMB 11778 / NCTC 12712 / WDCM 00102 / Lb 14) protein is Adenylate kinase.